Reading from the N-terminus, the 428-residue chain is ATP phosphoribosyltransferase regulatory subunit (428 aa).

The protein belongs to the class-II aminoacyl-tRNA synthetase family. HisZ subfamily. In terms of assembly, heteromultimer composed of HisG and HisZ subunits.

It localises to the cytoplasm. It functions in the pathway amino-acid biosynthesis; L-histidine biosynthesis; L-histidine from 5-phospho-alpha-D-ribose 1-diphosphate: step 1/9. Required for the first step of histidine biosynthesis. May allow the feedback regulation of ATP phosphoribosyltransferase activity by histidine. This Syntrophotalea carbinolica (strain DSM 2380 / NBRC 103641 / GraBd1) (Pelobacter carbinolicus) protein is ATP phosphoribosyltransferase regulatory subunit.